The following is a 257-amino-acid chain: Steroid 5-alpha-reductase DET2 (257 aa).

The next 6 membrane-spanning stretches (helical) occupy residues 11-31, 47-67, 78-97, 110-130, 151-171, and 200-220; these read FIVFFILVMAFPTFILCQFFT, ISPPIAWAFMESPTLWLTIIV, LAFLLISPYLFHYTNRTIIY, FPLNIAVTAFIFNLLNAYIQS, IGLVIFGSGMLLNIWADGVLL, and IMEWLGWALMTWSWAGLAFFV.

This sequence belongs to the steroid 5-alpha reductase family. Mostly expressed in leaves and hypocotyls and, to a lower extent, in stems, cotyledons, roots, seeds and callus.

It localises to the membrane. The catalysed reaction is a 3-oxo-5alpha-steroid + NADP(+) = a 3-oxo-Delta(4)-steroid + NADPH + H(+). Its pathway is plant hormone biosynthesis; brassinosteroid biosynthesis. Its activity is regulated as follows. Repressed by steroid (4-MA, VG106, PD91, PD17, Finasteride) and non-steroid (AS601811, AFA27, AFA76, AFA131, AFA192) inhibitors; steroid inhibitors are generally more efficient. Its function is as follows. Involved in a reduction step in the biosynthesis of the plant steroid, brassinolide (BL). Can use progesterone, testosterone, androstenedione and campestenone as substrate. This is Steroid 5-alpha-reductase DET2 from Solanum lycopersicum (Tomato).